Reading from the N-terminus, the 220-residue chain is Lipoprotein-releasing system ATP-binding protein LolD (220 aa).

Residues 1 to 220 (MRAVDIHKSY…YRMKDGQWQS (220 aa)) enclose the ABC transporter domain. 37-44 (GASGAGKS) provides a ligand contact to ATP.

It belongs to the ABC transporter superfamily. Lipoprotein translocase (TC 3.A.1.125) family. In terms of assembly, the complex is composed of two ATP-binding proteins (LolD) and two transmembrane proteins (LolC and LolE).

It is found in the cell inner membrane. In terms of biological role, part of the ABC transporter complex LolCDE involved in the translocation of mature outer membrane-directed lipoproteins, from the inner membrane to the periplasmic chaperone, LolA. Responsible for the formation of the LolA-lipoprotein complex in an ATP-dependent manner. The polypeptide is Lipoprotein-releasing system ATP-binding protein LolD (Bdellovibrio bacteriovorus (strain ATCC 15356 / DSM 50701 / NCIMB 9529 / HD100)).